The primary structure comprises 132 residues: L-ectoine synthase (132 aa).

Belongs to the ectoine synthase family.

It carries out the reaction (2S)-4-acetamido-2-aminobutanoate = L-ectoine + H2O. It functions in the pathway amine and polyamine biosynthesis; ectoine biosynthesis; L-ectoine from L-aspartate 4-semialdehyde: step 3/3. Catalyzes the circularization of gamma-N-acetyl-alpha,gamma-diaminobutyric acid (ADABA) to ectoine (1,4,5,6-tetrahydro-2-methyl-4-pyrimidine carboxylic acid), which is an excellent osmoprotectant. This chain is L-ectoine synthase, found in Hahella chejuensis (strain KCTC 2396).